A 50-amino-acid chain; its full sequence is Toxic protein HokE (50 aa).

The chain crosses the membrane as a helical span at residues 5–25; it reads YALAAVIVLCLTVLGFTLLVG.

Belongs to the Hok/Gef family.

It is found in the cell inner membrane. In terms of biological role, toxic component of a type I toxin-antitoxin (TA) system; if it expressed it could be neutralized by antisense antitoxin RNA SokE. The polypeptide is Toxic protein HokE (Escherichia coli (strain K12)).